Reading from the N-terminus, the 369-residue chain is Ubiquinone biosynthesis O-methyltransferase, mitochondrial (369 aa).

The N-terminal 85 residues, 1 to 85, are a transit peptide targeting the mitochondrion; sequence MWSGRKLGSS…SFRYPWARLY (85 aa). R124 provides a ligand contact to S-adenosyl-L-methionine. K143 and K149 each carry N6-acetyllysine. 2 residues coordinate S-adenosyl-L-methionine: G154 and D175. K196 carries the post-translational modification N6-acetyllysine. S222 contacts S-adenosyl-L-methionine. Mg(2+) contacts are provided by E223, E226, and H227.

This sequence belongs to the class I-like SAM-binding methyltransferase superfamily. UbiG/COQ3 family. As to quaternary structure, component of a multi-subunit COQ enzyme complex, composed of at least COQ3, COQ4, COQ5, COQ6, COQ7 and COQ9. Mg(2+) is required as a cofactor.

Its subcellular location is the mitochondrion inner membrane. The catalysed reaction is 3,4-dihydroxy-5-(all-trans-decaprenyl)benzoate + S-adenosyl-L-methionine = 4-hydroxy-3-methoxy-5-(all-trans-decaprenyl)benzoate + S-adenosyl-L-homocysteine + H(+). It catalyses the reaction a 3-demethylubiquinone + S-adenosyl-L-methionine = a ubiquinone + S-adenosyl-L-homocysteine. The enzyme catalyses 3-demethylubiquinol-10 + S-adenosyl-L-methionine = ubiquinol-10 + S-adenosyl-L-homocysteine + H(+). It participates in cofactor biosynthesis; ubiquinone biosynthesis. O-methyltransferase required for two non-consecutive steps during ubiquinone biosynthesis. Catalyzes the 2 O-methylation of 3,4-dihydroxy-5-(all-trans-decaprenyl)benzoic acid into 4-hydroxy-3-methoxy-5-(all-trans-decaprenyl)benzoic acid. Also catalyzes the last step of ubiquinone biosynthesis by mediating methylation of 3-demethylubiquinone into ubiquinone. Also able to mediate the methylation of 3-demethylubiquinol-10 into ubiquinol-10. The polypeptide is Ubiquinone biosynthesis O-methyltransferase, mitochondrial (Homo sapiens (Human)).